Consider the following 724-residue polypeptide: MHAELSEMELRIVARLNEEIGKDASQLHRASHLVSHYKKHLQVLSQTLDYEDPQNVSCYKTAFQCQQQVCESIDFELEKLAHFEDKLKRKLKECQPVLEGVAEDLDKVRQLQRLQQYLLLVQDIQEISAALGNAINGKDEDKLVNIYLTLYEGNDCEHSVVGRLHAVQAQSLKSFAERTAIYWHKLLLKRLSSAFEAVLKSMRWAHLEQQALNYSSARDTAKAQLLAEYMFLIKSPAEERAPLQSITPSIVCQPINRVVQLLLAPYRQRFQFHFTGTRQTNRLDKPEWFYTQILNWGKETHFFVGKTFQPAAIKAGKLDYNLRLEFIRGLVQLAIEKLAVDIEQIAQDQILFAHLLDETLAFESELRETFGYPASFPSAISVITQPMYLLRWISLEERFCAEKMDDILQAETPFQLIDPNSFENDLKIPKCADQFMRLLDAIKDRYYGLIQPGHQLQFLHLQLELIDSFRQRLVQLHSSGAVPSIPILNAINYLVMVLREWGENVHYLHLHAALAGPNATEINSVFEHAVAELEHWARQLMRNLATKATNEMKAKSMSYRRDAWPTMPEQNSREPFILSPSGGEMFQVLVTLLHNLERELSANLFTQTLRLIAHQIDDFMLESMVMNTKFSAAGAAQFNYDMTRNLFALFGQYTRRPELLFKRTHDACKLLAAARGTALLLLETLRGNQSVEEKTKPLRELHVLSMDSKQCIEVLERRMDIKMF.

Residues 163-724 (RLHAVQAQSL…LERRMDIKMF (562 aa)) form the RINT1/TIP20 domain.

Belongs to the RINT1 family.

During cytokinesis in male meiotic cells, required for completion of cleavage furrow ingression possibly in conjunction with Zw10. Required for maintenance of Golgi stack number and morphology. Essential for acroblast assembly. The protein is RINT1-like protein of Drosophila melanogaster (Fruit fly).